The primary structure comprises 633 residues: Threonine--tRNA ligase (633 aa).

Residues Met-1 to Gln-59 form the TGS domain. The catalytic stretch occupies residues Asp-240–Pro-532. Residues Cys-332, His-383, and His-509 each contribute to the Zn(2+) site.

The protein belongs to the class-II aminoacyl-tRNA synthetase family. In terms of assembly, homodimer. Requires Zn(2+) as cofactor.

The protein localises to the cytoplasm. The catalysed reaction is tRNA(Thr) + L-threonine + ATP = L-threonyl-tRNA(Thr) + AMP + diphosphate + H(+). Catalyzes the attachment of threonine to tRNA(Thr) in a two-step reaction: L-threonine is first activated by ATP to form Thr-AMP and then transferred to the acceptor end of tRNA(Thr). Also edits incorrectly charged L-seryl-tRNA(Thr). This Wolbachia pipientis subsp. Culex pipiens (strain wPip) protein is Threonine--tRNA ligase.